The following is a 248-amino-acid chain: Tyrosine recombinase XerD-like (248 aa).

Residues 1–72 (MIAFIEPFLA…TVNQFLYYLY (72 aa)) form the Core-binding (CB) domain. The Tyr recombinase domain maps to 92–248 (SLKPQLTRLD…PITLEKYYKM (157 aa)). The active site involves Arg213. Catalysis depends on Tyr245, which acts as the O-(3'-phospho-DNA)-tyrosine intermediate.

Belongs to the 'phage' integrase family. XerD-like subfamily.

It localises to the cytoplasm. Its function is as follows. Putative tyrosine recombinase. Not involved in the cutting and rejoining of the recombining DNA molecules on dif(SL) site. In Streptococcus equi subsp. zooepidemicus (strain MGCS10565), this protein is Tyrosine recombinase XerD-like.